The primary structure comprises 438 residues: 23S rRNA (uracil(1939)-C(5))-methyltransferase RlmD (438 aa).

The region spanning 10 to 69 is the TRAM domain; sequence KASVNTKHQSVDVVRLDHNGAGIAFVDKKPVFIEGALPGEKAIIQFIEQKKQFSRAKLIK. Residues C82, C88, C91, and C169 each contribute to the [4Fe-4S] cluster site. S-adenosyl-L-methionine-binding residues include Q272, F301, N306, E322, N349, and D370. C396 functions as the Nucleophile in the catalytic mechanism.

It belongs to the class I-like SAM-binding methyltransferase superfamily. RNA M5U methyltransferase family. RlmD subfamily.

The enzyme catalyses uridine(1939) in 23S rRNA + S-adenosyl-L-methionine = 5-methyluridine(1939) in 23S rRNA + S-adenosyl-L-homocysteine + H(+). Catalyzes the formation of 5-methyl-uridine at position 1939 (m5U1939) in 23S rRNA. This is 23S rRNA (uracil(1939)-C(5))-methyltransferase RlmD from Aliivibrio fischeri (strain ATCC 700601 / ES114) (Vibrio fischeri).